The chain runs to 185 residues: MINEIKKDAQDRMEKSLEALKGHISKIRTGRAQPSLLDAIQVDYYGAATPLRQLANVVAEDARTLAVTVFDRSLIQAVEKAILTSDLGLNPSSAGTTIRVPLPPLTEERRRDLTKLVKAEGEQGKVAVRNVRRDANEKIKALLKDKEISENEQRKAEDDIQKLTDSFVKKVDEVLADKEKELMDF.

The protein belongs to the RRF family.

The protein resides in the cytoplasm. In terms of biological role, responsible for the release of ribosomes from messenger RNA at the termination of protein biosynthesis. May increase the efficiency of translation by recycling ribosomes from one round of translation to another. The chain is Ribosome-recycling factor from Actinobacillus succinogenes (strain ATCC 55618 / DSM 22257 / CCUG 43843 / 130Z).